Reading from the N-terminus, the 141-residue chain is Nucleoside diphosphate kinase (141 aa).

Residues lysine 11, phenylalanine 59, arginine 87, threonine 93, arginine 104, and asparagine 114 each contribute to the ATP site. The active-site Pros-phosphohistidine intermediate is the histidine 117.

This sequence belongs to the NDK family. As to quaternary structure, homotetramer. Mg(2+) is required as a cofactor.

Its subcellular location is the cytoplasm. It carries out the reaction a 2'-deoxyribonucleoside 5'-diphosphate + ATP = a 2'-deoxyribonucleoside 5'-triphosphate + ADP. It catalyses the reaction a ribonucleoside 5'-diphosphate + ATP = a ribonucleoside 5'-triphosphate + ADP. Major role in the synthesis of nucleoside triphosphates other than ATP. The ATP gamma phosphate is transferred to the NDP beta phosphate via a ping-pong mechanism, using a phosphorylated active-site intermediate. In Acidithiobacillus ferrooxidans (strain ATCC 53993 / BNL-5-31) (Leptospirillum ferrooxidans (ATCC 53993)), this protein is Nucleoside diphosphate kinase.